We begin with the raw amino-acid sequence, 469 residues long: Glutamate--tRNA ligase 2 (469 aa).

The short motif at 11 to 21 is the 'HIGH' region element; the sequence is PSPTGHLHLGG. Residues 238-242 carry the 'KMSKS' region motif; it reads KLSKR. ATP is bound at residue Lys241.

The protein belongs to the class-I aminoacyl-tRNA synthetase family. Glutamate--tRNA ligase type 1 subfamily. Monomer.

The protein resides in the cytoplasm. It catalyses the reaction tRNA(Glu) + L-glutamate + ATP = L-glutamyl-tRNA(Glu) + AMP + diphosphate. In terms of biological role, catalyzes the attachment of glutamate to tRNA(Glu) in a two-step reaction: glutamate is first activated by ATP to form Glu-AMP and then transferred to the acceptor end of tRNA(Glu). This chain is Glutamate--tRNA ligase 2, found in Ehrlichia chaffeensis (strain ATCC CRL-10679 / Arkansas).